The primary structure comprises 515 residues: Bifunctional purine biosynthesis protein PurH (515 aa).

An MGS-like domain is found at 1–145 (MTKRALISVS…KNHASVTVVV (145 aa)).

The protein belongs to the PurH family.

The catalysed reaction is (6R)-10-formyltetrahydrofolate + 5-amino-1-(5-phospho-beta-D-ribosyl)imidazole-4-carboxamide = 5-formamido-1-(5-phospho-D-ribosyl)imidazole-4-carboxamide + (6S)-5,6,7,8-tetrahydrofolate. It catalyses the reaction IMP + H2O = 5-formamido-1-(5-phospho-D-ribosyl)imidazole-4-carboxamide. Its pathway is purine metabolism; IMP biosynthesis via de novo pathway; 5-formamido-1-(5-phospho-D-ribosyl)imidazole-4-carboxamide from 5-amino-1-(5-phospho-D-ribosyl)imidazole-4-carboxamide (10-formyl THF route): step 1/1. It participates in purine metabolism; IMP biosynthesis via de novo pathway; IMP from 5-formamido-1-(5-phospho-D-ribosyl)imidazole-4-carboxamide: step 1/1. In Streptococcus pyogenes serotype M3 (strain ATCC BAA-595 / MGAS315), this protein is Bifunctional purine biosynthesis protein PurH.